The chain runs to 396 residues: Elongation factor Tu (396 aa).

One can recognise a tr-type G domain in the interval 10 to 206 (KPHVNVGTIG…ALDTYIPTPE (197 aa)). Residues 19–26 (GHVDHGKT) form a G1 region. 19 to 26 (GHVDHGKT) is a binding site for GTP. Thr26 provides a ligand contact to Mg(2+). The segment at 60–64 (GITIN) is G2. The segment at 81-84 (DCPG) is G3. Residues 81–85 (DCPGH) and 136–139 (NKCD) contribute to the GTP site. Positions 136 to 139 (NKCD) are G4. A G5 region spans residues 174 to 176 (SAK).

The protein belongs to the TRAFAC class translation factor GTPase superfamily. Classic translation factor GTPase family. EF-Tu/EF-1A subfamily. In terms of assembly, monomer.

It is found in the cytoplasm. The catalysed reaction is GTP + H2O = GDP + phosphate + H(+). Functionally, GTP hydrolase that promotes the GTP-dependent binding of aminoacyl-tRNA to the A-site of ribosomes during protein biosynthesis. This chain is Elongation factor Tu, found in Polynucleobacter asymbioticus (strain DSM 18221 / CIP 109841 / QLW-P1DMWA-1) (Polynucleobacter necessarius subsp. asymbioticus).